Here is a 414-residue protein sequence, read N- to C-terminus: Methanesulfonate monooxygenase hydroxylase subunit alpha (414 aa).

The 120-residue stretch at 44-163 folds into the Rieske domain; the sequence is WVPFRHESEL…CEVKFGGFVW (120 aa). Residues Cys86, His88, Cys115, and His118 each coordinate [2Fe-2S] cluster. Residue His225 participates in Fe cation binding.

The protein belongs to the bacterial ring-hydroxylating dioxygenase alpha subunit family. In terms of assembly, the MSA monooxygenase system consists of 4 proteins: the 2 subunits of the hydroxylase component (MsmA and MsmB), a ferredoxin (MsmC) and a ferredoxin reductase (MsmD). The hydroxylase component consists of a 3 alpha (MsmA) and 3 beta (MsmB) subunits. The cofactor is [2Fe-2S] cluster. Fe cation serves as cofactor.

Its subcellular location is the cytoplasm. The enzyme catalyses methanesulfonate + NADH + O2 = sulfite + formaldehyde + NAD(+) + H2O. Its activity is regulated as follows. MSAMO is inhibited by metal chelators (such as bathophenanthroline, bathocuprione, neocuprione, alpha-alpha-dipyridil and sodium EDTA) and by sodium azide, sodium arsenate and potassium cyanide. Its function is as follows. Methanesulfonate monooxygenase (MSAMO) mediates the primary degradation of methanesulfonic acid (MSA) to produce formaldehyd and inorganic sulfite by initial hydroxylation of the carbon atom prior to spontaneous cleavage of the unstable hydroxymethanesulfonic acid. MSAMO has a restricted substrate range that includes only the short-chain aliphatic sulfonates (methane- to butanesulfonate) and excludes all larger molecules, such as arylsulfonates and aromatic sulfonates. All MSAMO components are required for enzyme activity. The sequence is that of Methanesulfonate monooxygenase hydroxylase subunit alpha from Methylosulfonomonas methylovora.